The sequence spans 477 residues: Cysteine--tRNA ligase (477 aa).

Residue Cys28 coordinates Zn(2+). Residues Pro30–Asn40 carry the 'HIGH' region motif. Zn(2+)-binding residues include Cys213, His238, and Glu242. The 'KMSKS' region signature appears at Lys270–Ser274. Lys273 lines the ATP pocket.

This sequence belongs to the class-I aminoacyl-tRNA synthetase family. As to quaternary structure, monomer. Requires Zn(2+) as cofactor.

It localises to the cytoplasm. The catalysed reaction is tRNA(Cys) + L-cysteine + ATP = L-cysteinyl-tRNA(Cys) + AMP + diphosphate. This Chlamydia trachomatis serovar D (strain ATCC VR-885 / DSM 19411 / UW-3/Cx) protein is Cysteine--tRNA ligase (cysS).